The chain runs to 503 residues: NAD(P)H-quinone oxidoreductase chain 4, chloroplastic (503 aa).

14 helical membrane passes run Phe-3–Phe-23, Leu-37–Val-57, Gly-84–Ala-104, Leu-113–Ala-130, Leu-134–Met-154, Phe-167–Leu-187, Ala-208–Leu-228, His-242–Ile-262, Ser-274–Thr-294, Ile-305–Asp-325, Gly-330–Gly-350, Ser-385–Ile-405, Ile-416–Met-436, and Leu-462–Val-482.

This sequence belongs to the complex I subunit 4 family.

The protein localises to the plastid. It is found in the chloroplast thylakoid membrane. The catalysed reaction is a plastoquinone + NADH + (n+1) H(+)(in) = a plastoquinol + NAD(+) + n H(+)(out). The enzyme catalyses a plastoquinone + NADPH + (n+1) H(+)(in) = a plastoquinol + NADP(+) + n H(+)(out). The chain is NAD(P)H-quinone oxidoreductase chain 4, chloroplastic from Ipomoea purpurea (Common morning glory).